Reading from the N-terminus, the 539-residue chain is MIATQTFVSVFFFVFFLVSLPFFSSAAPPSSDSIYESFVQCFSDKTKSPQAQITDNVFSRTNPSFSSVLRAYIRNGRFNTSSTPKPAIIVTPRSDIHVSAAVTCSKSLNFLLKIRSGGHDYEGLSYISDKPFFILDMSNLRDVSVDIADQSAWISAGATLGEVYYRIWEKSKVHGFPAGVCPTVGVGGHISGGGYGNMLRKFGLSVDNLIDAKIVDVNGQILDRKSMGEDLFWAISGGGGASFGVVLGYKVKLVPVPETVTVFRVEKYMDSGAVDMVHKWQSVGPKTDRNLFLRMLIQPVTRKKVKTVRATVVALFLGRAEEVVALLGKEFPELSLKKENCSEMTWFQSALWWDNRVNPTQIDPKVFLDRNLDRANFGKRKSDYVASEIPRDGIESLFKKMTELGKIGLVFNPYGGKMAEVTVNATPFPHRSKLFKIQYSVTWQENSVEIEKGFLNQANVLYSFMTGFVSKNPRNAYLNYRDVDIGVNDHGTNSYEEGEVYGRKYFGDNFDRLVKVKTAADPDNFFRNEQSIPTVLSKA.

A signal peptide spans M1 to A26. C41 and C104 form a disulfide bridge. N79 carries an N-linked (GlcNAc...) asparagine glycan. Residues S82 to V256 enclose the FAD-binding PCMH-type domain. Residues H119–C181 constitute a cross-link (6-(S-cysteinyl)-8alpha-(pros-histidyl)-FAD (His-Cys)). N-linked (GlcNAc...) asparagine glycosylation is present at N340.

This sequence belongs to the oxygen-dependent FAD-linked oxidoreductase family. Requires FAD as cofactor. Post-translationally, the FAD cofactor is bound via a bicovalent 6-S-cysteinyl, 8alpha-N1-histidyl FAD linkage.

The protein localises to the secreted. It is found in the cell wall. The sequence is that of Berberine bridge enzyme-like 21 from Arabidopsis thaliana (Mouse-ear cress).